Here is a 179-residue protein sequence, read N- to C-terminus: Adenine phosphoribosyltransferase (179 aa).

Belongs to the purine/pyrimidine phosphoribosyltransferase family. As to quaternary structure, homodimer.

The protein localises to the cytoplasm. The catalysed reaction is AMP + diphosphate = 5-phospho-alpha-D-ribose 1-diphosphate + adenine. The protein operates within purine metabolism; AMP biosynthesis via salvage pathway; AMP from adenine: step 1/1. Functionally, catalyzes a salvage reaction resulting in the formation of AMP, that is energically less costly than de novo synthesis. The chain is Adenine phosphoribosyltransferase from Helicobacter acinonychis (strain Sheeba).